The primary structure comprises 171 residues: Terminase, small subunit (171 aa).

It belongs to the P23virus small terminase family. As to quaternary structure, homononamer; forms a ring-like structure through which genomic DNA is translocated into the capsid. Heterodimer with the terminase large subunit; the active complex is probably heterooligomeric.

Functionally, the terminase small subunit binds to the packaging initiation site and regulates the ATPase activity of the terminase large subunit. The terminase lies at a unique vertex of the procapsid and is composed of two subunits, a small terminase subunit involved in viral DNA recognition (packaging sequence), and a large terminase subunit. Both terminase subunits heterooligomerize and are docked on the portal protein to form the packaging machine. The chain is Terminase, small subunit from Thermus virus P23-45 (Thermus thermophilus phage P23-45).